The sequence spans 273 residues: Dermonecrotic toxin SdSicTox-betaIIB1bxiv (273 aa).

His4 is an active-site residue. Mg(2+)-binding residues include Glu24 and Asp26. The active-site Nucleophile is His40. 2 disulfide bridges follow: Cys44–Cys50 and Cys46–Cys189. A Mg(2+)-binding site is contributed by Asp84.

It belongs to the arthropod phospholipase D family. Class II subfamily. It depends on Mg(2+) as a cofactor. Expressed by the venom gland.

It localises to the secreted. The catalysed reaction is an N-(acyl)-sphingosylphosphocholine = an N-(acyl)-sphingosyl-1,3-cyclic phosphate + choline. The enzyme catalyses an N-(acyl)-sphingosylphosphoethanolamine = an N-(acyl)-sphingosyl-1,3-cyclic phosphate + ethanolamine. It catalyses the reaction a 1-acyl-sn-glycero-3-phosphocholine = a 1-acyl-sn-glycero-2,3-cyclic phosphate + choline. It carries out the reaction a 1-acyl-sn-glycero-3-phosphoethanolamine = a 1-acyl-sn-glycero-2,3-cyclic phosphate + ethanolamine. In terms of biological role, dermonecrotic toxins cleave the phosphodiester linkage between the phosphate and headgroup of certain phospholipids (sphingolipid and lysolipid substrates), forming an alcohol (often choline) and a cyclic phosphate. This toxin acts on sphingomyelin (SM). It may also act on ceramide phosphoethanolamine (CPE), lysophosphatidylcholine (LPC) and lysophosphatidylethanolamine (LPE), but not on lysophosphatidylserine (LPS), and lysophosphatidylglycerol (LPG). It acts by transphosphatidylation, releasing exclusively cyclic phosphate products as second products. Induces dermonecrosis, hemolysis, increased vascular permeability, edema, inflammatory response, and platelet aggregation. This is Dermonecrotic toxin SdSicTox-betaIIB1bxiv from Sicarius cf. damarensis (strain GJB-2008) (Six-eyed sand spider).